The primary structure comprises 339 residues: UPF0324 membrane protein SpyM3_0740 (339 aa).

Transmembrane regions (helical) follow at residues Lys-7–Leu-24, Phe-28–His-50, Gly-57–Leu-79, Ala-84–Gly-106, Ala-118–Ile-140, Ala-150–Leu-172, Phe-256–Val-275, Phe-290–Leu-307, and Ala-314–Leu-336.

This sequence belongs to the UPF0324 family.

It is found in the cell membrane. This is UPF0324 membrane protein SpyM3_0740 from Streptococcus pyogenes serotype M3 (strain ATCC BAA-595 / MGAS315).